Reading from the N-terminus, the 363-residue chain is 3-isopropylmalate dehydrogenase (363 aa).

78-91 (XXXXXXXXXXXXXX) serves as a coordination point for NAD(+). Substrate-binding residues include arginine 99, arginine 109, arginine 138, and aspartate 227. Residues aspartate 227, aspartate 251, and aspartate 255 each coordinate Mg(2+). Position 285-297 (285-297 (GSAPDIEGKNIAN)) interacts with NAD(+).

Belongs to the isocitrate and isopropylmalate dehydrogenases family. LeuB type 1 subfamily. Homodimer. The cofactor is Mg(2+). Requires Mn(2+) as cofactor.

It localises to the cytoplasm. The catalysed reaction is (2R,3S)-3-isopropylmalate + NAD(+) = 4-methyl-2-oxopentanoate + CO2 + NADH. It functions in the pathway amino-acid biosynthesis; L-leucine biosynthesis; L-leucine from 3-methyl-2-oxobutanoate: step 3/4. In terms of biological role, catalyzes the oxidation of 3-carboxy-2-hydroxy-4-methylpentanoate (3-isopropylmalate) to 3-carboxy-4-methyl-2-oxopentanoate. The product decarboxylates to 4-methyl-2 oxopentanoate. This is 3-isopropylmalate dehydrogenase from Buchnera aphidicola subsp. Uroleucon solidaginis.